We begin with the raw amino-acid sequence, 169 residues long: MIELHAILAATANGCIGKDNALPWPPLKGDLARFKKLTMGKVVIMGRKTYESLPVKLEGRTCIVMTRQALELPGVRDANGAIFVNNVSDAMRFAQEESVGDVAYVIGGAEIFKRLALMITQIELTFVKRLYEGDTYVDLAEMVKDYEQNGMEEHDLHTYFTYRKKELTE.

The region spanning 3–169 is the DHFR domain; sequence ELHAILAATA…FTYRKKELTE (167 aa).

It belongs to the dihydrofolate reductase family. Homodimer.

The enzyme catalyses (6S)-5,6,7,8-tetrahydrofolate + NADP(+) = 7,8-dihydrofolate + NADPH + H(+). The protein operates within cofactor biosynthesis; tetrahydrofolate biosynthesis; 5,6,7,8-tetrahydrofolate from 7,8-dihydrofolate: step 1/1. Key enzyme in folate metabolism. Catalyzes an essential reaction for de novo glycine and purine synthesis, and for DNA precursor synthesis. In Escherichia coli, this protein is Dihydrofolate reductase type 8 (dhfrVIII).